The sequence spans 151 residues: Large ribosomal subunit protein bL9 (151 aa).

This sequence belongs to the bacterial ribosomal protein bL9 family.

In terms of biological role, binds to the 23S rRNA. This chain is Large ribosomal subunit protein bL9, found in Pelobacter propionicus (strain DSM 2379 / NBRC 103807 / OttBd1).